A 188-amino-acid chain; its full sequence is Transmembrane protein 160 (188 aa).

Residues 1-96 (MGGGWWWARA…ISFMQSDMGR (96 aa)) constitute a mitochondrion transit peptide. The segment at 24–52 (PPQRPRSGGARGSFAPGHGPRAGASPPPV) is disordered. Serine 48 bears the Phosphoserine mark. The next 2 helical transmembrane spans lie at 102–122 (FFLL…VGLA) and 135–155 (AAVG…AVGL). The disordered stretch occupies residues 168-188 (PEDDGTASAEGPDEAGRPPPE).

It belongs to the TMEM160 family.

Its subcellular location is the mitochondrion inner membrane. The sequence is that of Transmembrane protein 160 from Homo sapiens (Human).